The following is a 361-amino-acid chain: Probable mannose-1-phosphate guanylyltransferase 1 (361 aa).

The GDP-alpha-D-mannose site is built by L6 and V7. Diphosphate contacts are provided by G9, G11, T12, R13, and K23. Residues G85, N109, D111, G146, and N173 each coordinate GDP-alpha-D-mannose.

This sequence belongs to the transferase hexapeptide repeat family.

The enzyme catalyses alpha-D-mannose 1-phosphate + GTP + H(+) = GDP-alpha-D-mannose + diphosphate. It participates in nucleotide-sugar biosynthesis; GDP-alpha-D-mannose biosynthesis; GDP-alpha-D-mannose from alpha-D-mannose 1-phosphate (GTP route): step 1/1. Its function is as follows. Catalyzes a reaction of the Smirnoff-Wheeler pathway, the major route to ascorbate biosynthesis in plants. This Oryza sativa subsp. japonica (Rice) protein is Probable mannose-1-phosphate guanylyltransferase 1.